The primary structure comprises 142 residues: Hemoglobin subunit alpha (142 aa).

A Globin domain is found at 2-142 (VLSSADKNNV…VSTVLTSKYR (141 aa)). S4 bears the Phosphoserine mark. N6-succinyllysine is present on residues K8 and K12. The residue at position 17 (K17) is an N6-acetyllysine; alternate. K17 carries the post-translational modification N6-succinyllysine; alternate. The residue at position 25 (Y25) is a Phosphotyrosine. The residue at position 36 (S36) is a Phosphoserine. K41 is subject to N6-succinyllysine. Residue S50 is modified to Phosphoserine. Position 59 (H59) interacts with O2. H88 provides a ligand contact to heme b. S103 bears the Phosphoserine mark. Position 109 is a phosphothreonine (T109). A Phosphoserine modification is found at S125. Phosphothreonine is present on residues T135 and T138. A Phosphoserine modification is found at S139.

The protein belongs to the globin family. As to quaternary structure, heterotetramer of two alpha chains and two beta chains. As to expression, red blood cells.

Functionally, involved in oxygen transport from the lung to the various peripheral tissues. Its function is as follows. Hemopressin acts as an antagonist peptide of the cannabinoid receptor CNR1. Hemopressin-binding efficiently blocks cannabinoid receptor CNR1 and subsequent signaling. The chain is Hemoglobin subunit alpha (HBA) from Panthera leo (Lion).